The sequence spans 185 residues: Ribosome-recycling factor (185 aa).

It belongs to the RRF family.

The protein resides in the cytoplasm. Its function is as follows. Responsible for the release of ribosomes from messenger RNA at the termination of protein biosynthesis. May increase the efficiency of translation by recycling ribosomes from one round of translation to another. This chain is Ribosome-recycling factor, found in Kineococcus radiotolerans (strain ATCC BAA-149 / DSM 14245 / SRS30216).